The following is a 132-amino-acid chain: Small ribosomal subunit protein uS8 (132 aa).

This sequence belongs to the universal ribosomal protein uS8 family. As to quaternary structure, part of the 30S ribosomal subunit. Contacts proteins S5 and S12.

In terms of biological role, one of the primary rRNA binding proteins, it binds directly to 16S rRNA central domain where it helps coordinate assembly of the platform of the 30S subunit. The protein is Small ribosomal subunit protein uS8 of Streptococcus pneumoniae (strain Taiwan19F-14).